Consider the following 349-residue polypeptide: N-acetyltaurine hydrolase (349 aa).

6 residues coordinate a divalent metal cation: His-26, His-28, Glu-169, His-201, His-230, and Asp-298.

This sequence belongs to the metallo-dependent hydrolases superfamily. Phosphotriesterase family. Requires a divalent metal cation as cofactor.

The protein resides in the cytoplasm. Its subcellular location is the cytosol. It carries out the reaction N-acetyltaurine + H2O = taurine + acetate. It catalyses the reaction N-propanoyltaurine + H2O = propanoate + taurine. The enzyme catalyses N-acetyl-L-methionine + H2O = L-methionine + acetate. The catalysed reaction is N-acetyl-L-isoleucine + H2O = L-isoleucine + acetate. It carries out the reaction N-acetyl-L-leucine + H2O = L-leucine + acetate. It catalyses the reaction N-acetyl-L-valine + H2O = L-valine + acetate. Functionally, N-acetyltaurine hydrolase that regulates feeding by catalyzing the hydrolysis of N-acetyltaurine into taurine and acetate. N-acetyltaurine has anorexigenic and anti-obesity effects that are dependent on GFRAL receptor and GDF15. PTER also acts on other N-acetyl amino acids (Met, Ile, Leu, Val) and N-propionyltaurine, but at lower rates. This chain is N-acetyltaurine hydrolase, found in Pongo abelii (Sumatran orangutan).